Reading from the N-terminus, the 735-residue chain is MIP-related peptides (735 aa).

Positions 1–20 (MCTRPGLAALLVLMTSCASS) are cleaved as a signal peptide. Positions 21 to 135 (FSRADTQSAS…EDSDTKVDTR (115 aa)) are excised as a propeptide. The segment covering 33–65 (ALSAASADAQAARQQQEQHLVAQQQQQQQQQQQ) has biased composition (low complexity). Disordered regions lie at residues 33–212 (ALSA…FGKK) and 229–251 (FGKKSSGESAGDSGYISVASRGS). Polar residues-rich tracts occupy residues 66–76 (HSNNNEPQQRA) and 101–125 (PVSQPDLSPDFSNPMGSSLSQSGTP). Residues phenylalanine 142, phenylalanine 153, and phenylalanine 164 each carry the phenylalanine amide modification. Basic residues predominate over residues 142–159 (FGKKRGQAPRFFGKKRAM). A propeptide spanning residues 168–184 (SSEFPTSNSEQLALDTR) is cleaved from the precursor. Phenylalanine amide is present on phenylalanine 190. Residues 194 to 203 (SFPESNREQR) constitute a propeptide that is removed on maturation. Positions 194-204 (SFPESNREQRG) are enriched in basic and acidic residues. 2 positions are modified to phenylalanine amide: phenylalanine 209 and phenylalanine 229. The propeptide at 214–229 (FDENVDIDERAAPRFF) is linker peptide. The propeptide occupies 233 to 249 (SSGESAGDSGYISVASR). Phenylalanine 255 is subject to Phenylalanine amide. Residues 259–267 (QDDDIMIAA) constitute a propeptide, linker peptide. The residue at position 274 (phenylalanine 274) is a Phenylalanine amide. The propeptide at 279–287 (SDDNVALDL) is linker peptide. Position 294 is a phenylalanine amide (phenylalanine 294). A propeptide spanning residues 298–311 (QSSDLDDEISVALR) is cleaved from the precursor. Position 317 is a phenylalanine amide (phenylalanine 317). The propeptide occupies 321–332 (RADDEDILLGER). Phenylalanine 338 carries the phenylalanine amide modification. Residues 342–353 (RANDENISFSLR) constitute a propeptide that is removed on maturation. Disordered regions lie at residues 352-373 (LRGSPRFFGKKRSDESDDDNIG) and 381-400 (RFFGKKRSDETDDENIGLMA). Phenylalanine 359 bears the Phenylalanine amide mark. Residues 363-377 (RSDESDDDNIGLVAR) constitute a propeptide that is removed on maturation. Phenylalanine 383 is subject to Phenylalanine amide. Residues 387-401 (RSDETDDENIGLMAR) constitute a propeptide that is removed on maturation. The residue at position 407 (phenylalanine 407) is a Phenylalanine amide. Residues 412-426 (SDGLDDGGNIIDVAT) constitute a propeptide, linker peptide. The tract at residues 430–464 (PRFFGKKRSNSDSSDKSSDSALSSSESGRQTRQAP) is disordered. The residue at position 433 (phenylalanine 433) is a Phenylalanine amide. Positions 437 to 461 (RSNSDSSDKSSDSALSSSESGRQTR) are excised as a propeptide. Over residues 438 to 447 (SNSDSSDKSS) the composition is skewed to basic and acidic residues. Pyrrolidone carboxylic acid is present on glutamine 462. Phenylalanine 467 bears the Phenylalanine amide mark. The propeptide occupies 471-493 (YVDEHHVSKRAAATAFPLIIEAR). Glutamine 494 carries the post-translational modification Pyrrolidone carboxylic acid. Phenylalanine 499 bears the Phenylalanine amide mark. A propeptide spanning residues 503–509 (EYRYPPR) is cleaved from the precursor. An Isoleucine amide modification is found at isoleucine 515. Residues 519-546 (FSLYRSPGKYSLSSPYMSAKEFKETFRR) constitute a propeptide that is removed on maturation. Methionine 552 is subject to Methionine amide. The propeptide occupies 556–585 (TAELNEEGSDDFTNDDTDDENEYDETVLFK). At valine 592 the chain carries Valine amide. A Leucine amide modification is found at leucine 601. Residue isoleucine 610 is modified to Isoleucine amide. A Valine amide modification is found at valine 619. The residue at position 628 (isoleucine 628) is an Isoleucine amide. Positions 632–661 (DLDWYQKALCAEADILELDDCADFLGNDDV) are cleaved as a propeptide — linker peptide. Residue glutamine 664 is modified to Pyrrolidone carboxylic acid. Position 669 is an isoleucine amide (isoleucine 669). Positions 674–705 (GEDVSERDYAQLLEALSRLQAIKQIKARIQNE) are cleaved as a propeptide — linker peptide. Valine 714 is modified (valine amide). Positions 715-735 (GRRSEYNLGPFDEFVDESMER) are excised as a propeptide.

In terms of tissue distribution, expressed in the CNS and peripheral tissues (the digestive tract, vasculature, and the reproductive organs).

Its subcellular location is the secreted. In terms of biological role, has some structural and functional features similar to vertebrate opioid peptides. AMRPs are inhibitory on Aplysia esophagus, penis retractor muscle, and body wall muscle. In Aplysia californica (California sea hare), this protein is MIP-related peptides (MRP).